We begin with the raw amino-acid sequence, 392 residues long: Flavohemoprotein (392 aa).

The region spanning M1–E139 is the Globin domain. H85 contacts heme b. Catalysis depends on charge relay system residues Y95 and E138. The interval G150–E392 is reductase. Residues R153–A256 enclose the FAD-binding FR-type domain. Residues Y191 and R205–S208 contribute to the FAD site. G268–P273 is an NADP(+) binding site. F384–P387 lines the FAD pocket.

Belongs to the globin family. Two-domain flavohemoproteins subfamily. It in the C-terminal section; belongs to the flavoprotein pyridine nucleotide cytochrome reductase family. Heme b serves as cofactor. The cofactor is FAD.

It catalyses the reaction 2 nitric oxide + NADPH + 2 O2 = 2 nitrate + NADP(+) + H(+). The enzyme catalyses 2 nitric oxide + NADH + 2 O2 = 2 nitrate + NAD(+) + H(+). In terms of biological role, is involved in NO detoxification in an aerobic process, termed nitric oxide dioxygenase (NOD) reaction that utilizes O(2) and NAD(P)H to convert NO to nitrate, which protects the bacterium from various noxious nitrogen compounds. Therefore, plays a central role in the inducible response to nitrosative stress. In Pseudomonas putida (strain ATCC 47054 / DSM 6125 / CFBP 8728 / NCIMB 11950 / KT2440), this protein is Flavohemoprotein.